The primary structure comprises 609 residues: Arginine--tRNA ligase (609 aa).

A 'HIGH' region motif is present at residues 132–142 (ANPTSSLHVGH).

This sequence belongs to the class-I aminoacyl-tRNA synthetase family. In terms of assembly, monomer.

It is found in the cytoplasm. It catalyses the reaction tRNA(Arg) + L-arginine + ATP = L-arginyl-tRNA(Arg) + AMP + diphosphate. This chain is Arginine--tRNA ligase, found in Psychrobacter cryohalolentis (strain ATCC BAA-1226 / DSM 17306 / VKM B-2378 / K5).